A 311-amino-acid polypeptide reads, in one-letter code: Bifunctional protein FolD (311 aa).

Residues 180–182 (GRS), Ser209, and Ile250 each bind NADP(+).

It belongs to the tetrahydrofolate dehydrogenase/cyclohydrolase family. As to quaternary structure, homodimer.

It carries out the reaction (6R)-5,10-methylene-5,6,7,8-tetrahydrofolate + NADP(+) = (6R)-5,10-methenyltetrahydrofolate + NADPH. The enzyme catalyses (6R)-5,10-methenyltetrahydrofolate + H2O = (6R)-10-formyltetrahydrofolate + H(+). The protein operates within one-carbon metabolism; tetrahydrofolate interconversion. In terms of biological role, catalyzes the oxidation of 5,10-methylenetetrahydrofolate to 5,10-methenyltetrahydrofolate and then the hydrolysis of 5,10-methenyltetrahydrofolate to 10-formyltetrahydrofolate. This chain is Bifunctional protein FolD, found in Haloquadratum walsbyi (strain DSM 16790 / HBSQ001).